Consider the following 198-residue polypeptide: Recombination protein RecR (198 aa).

The C4-type zinc-finger motif lies at 57–72; that stretch reads CSICCNLSEHDPCPIC. In terms of domain architecture, Toprim spans 80-175; it reads NIVCVVETPQ…KVTRLGYGLP (96 aa).

The protein belongs to the RecR family.

Functionally, may play a role in DNA repair. It seems to be involved in an RecBC-independent recombinational process of DNA repair. It may act with RecF and RecO. The sequence is that of Recombination protein RecR from Endomicrobium trichonymphae.